The chain runs to 291 residues: Segregation and condensation protein B (291 aa).

It belongs to the ScpB family. Homodimer. Homodimerization may be required to stabilize the binding of ScpA to the Smc head domains. Component of a cohesin-like complex composed of ScpA, ScpB and the Smc homodimer, in which ScpA and ScpB bind to the head domain of Smc. The presence of the three proteins is required for the association of the complex with DNA.

Its subcellular location is the cytoplasm. Its function is as follows. Participates in chromosomal partition during cell division. May act via the formation of a condensin-like complex containing Smc and ScpA that pull DNA away from mid-cell into both cell halves. The chain is Segregation and condensation protein B from Mycoplasmoides gallisepticum (strain R(low / passage 15 / clone 2)) (Mycoplasma gallisepticum).